A 799-amino-acid polypeptide reads, in one-letter code: MAAAHLGMPVPVYMAEREEDLALRKLIDTLKISAGWDLEANRMAGRLYHFVMGRRAPVDTRAYVTTFGDKLEKGVHRFLWDNARDIDDLCKDFQNGPEYERLISRGMLSAKRMYDTYVLRTEEGGGEGAVYESALQMYARMAAFFTCQCFAYPSLRKTVSEVEGGSGRMESGLDFFAYFFKILASQLVSCATPVMRSAGLRQSYLASCFIMNPDMSTEDKTLSAVFRDLSPLLCSKSGVGMNLTNFSSGGKNVQSCLRLINSQVEFCNDKNLRPVSVAAYMELWHEQIEEFLAAKLPENPERCQSIFQGVCVPGLFFRLYEQNPDSQWHLFSPKVGGHLAGLYGDKFDEEYARLVRHGLYSSSLPAKSLMFALISAIIKTGSPYILSKDAINRHHWFETQGNAISYANLCAEVVQQPHEFTSTCNLANVCLPACLRARGEGEGAGAAGEGEGADRLSPLTPDLEFCFDTLRAAVRAAVYMINASILGGVCPTPGVRVMQAERSAGIGVQGLADVFAKLGRGYMDAESALLDARIFEVMYYQAVRASNQLVTVGGAPPHANWKNSKLSRGEFHWESWGVQYDSLFIERQLWEELRESVTKHGTFNSQFIALMPTAGTSQLTGLSESFYPFYANVSSKVSNKEEVMKPNITFLERVSPSDVPLLKYHGGDVSKLPPPLAAKYRNFLTAFDYSPEDQIRRAAARSPFVDQSQSFSFFLKEANVKSASYVKNLILLGHGLGLKTIMYYCRIQKQTSLTALECLQCTESPDSGDGVGGYKGGDEEPRSPEHAQCESPDRCLSCQ.

Substrate is bound by residues Thr192, 207–208 (SC), Gly238, 408–412 (NLCAE), and 612–616 (PTAGT). A disulfide bond links Cys208 and Cys424. The active-site Proton acceptor is Asn408. Cys410 serves as the catalytic Cysteine radical intermediate. Glu412 acts as the Proton acceptor in catalysis. The segment at 765–799 (PDSGDGVGGYKGGDEEPRSPEHAQCESPDRCLSCQ) is disordered. The span at 776-793 (GGDEEPRSPEHAQCESPD) shows a compositional bias: basic and acidic residues.

This sequence belongs to the ribonucleoside diphosphate reductase large chain family. In terms of assembly, heterotetramer composed of a homodimer of the large subunit (R1) and a homodimer of the small subunit (R2). Larger multisubunit protein complex are also active, composed of (R1)n(R2)n.

The enzyme catalyses a 2'-deoxyribonucleoside 5'-diphosphate + [thioredoxin]-disulfide + H2O = a ribonucleoside 5'-diphosphate + [thioredoxin]-dithiol. Ribonucleoside-diphosphate reductase holoenzyme provides the precursors necessary for viral DNA synthesis. Allows virus growth in non-dividing cells, as well as reactivation from latency in infected hosts. Catalyzes the biosynthesis of deoxyribonucleotides from the corresponding ribonucleotides. This Equine herpesvirus 2 (strain 86/87) (EHV-2) protein is Ribonucleoside-diphosphate reductase large subunit.